The chain runs to 121 residues: UPF0295 protein BH0952 (121 aa).

The next 2 membrane-spanning stretches (helical) occupy residues 12 to 32 (IRTFALSLVFLGILVMYIGIF) and 41 to 61 (VLAMILGFLCIIASTAVYFWI).

The protein belongs to the UPF0295 family.

It localises to the cell membrane. In Halalkalibacterium halodurans (strain ATCC BAA-125 / DSM 18197 / FERM 7344 / JCM 9153 / C-125) (Bacillus halodurans), this protein is UPF0295 protein BH0952.